Reading from the N-terminus, the 381-residue chain is Neuropeptide Y receptor type 2 (381 aa).

Positions 1–37 (MGPVGAEADENQTVEVKVEPYGPGHTTPRGELPPDPE) are disordered. Over 1–51 (MGPVGAEADENQTVEVKVEPYGPGHTTPRGELPPDPEPELIDSTKLVEVQV) the chain is Extracellular. A glycan (N-linked (GlcNAc...) asparagine) is linked at Asn-11. Residues 52-72 (ILILAYCSIILLGVVGNSLVI) traverse the membrane as a helical segment. Over 73-86 (HVVIKFKSMRTVTN) the chain is Cytoplasmic. A helical transmembrane segment spans residues 87 to 107 (FFIANLAVADLLVNTLCLPFT). At 108–124 (LTYTLMGEWKMGPVLCH) the chain is on the extracellular side. A disulfide bridge links Cys-123 with Cys-203. A helical membrane pass occupies residues 125–145 (LVPYAQGLAVQVSTITLTVIA). The Cytoplasmic segment spans residues 146-165 (LDRHRCIVYHLESKISKRIS). A helical membrane pass occupies residues 166–186 (FLIIGLAWGISALLASPLAIF). Over 187–216 (REYSLIEIIPDFEIVACTEKWPGEEKSVYG) the chain is Extracellular. Residues 217–237 (TVYSLSTLLILYVLPLGIISF) form a helical membrane-spanning segment. The Cytoplasmic segment spans residues 238–268 (SYTRIWSKLRNHVSPGAASDHYHQRRHKMTK). A helical transmembrane segment spans residues 269–289 (MLVCVVVVFAVSWLPLHAFQL). Over 290 to 304 (AVDIDSHVLDLKEYK) the chain is Extracellular. The chain crosses the membrane as a helical span at residues 305–325 (LIFTVFHIIAMCSTFANPLLY). Residues 326–381 (GWMNSNYRKAFLSAFRCEQRLDAIHSEVSMTFKAKKNLEVKKNNGPTDSFSEATNV) lie on the Cytoplasmic side of the membrane. Cys-342 carries S-palmitoyl cysteine lipidation.

The protein belongs to the G-protein coupled receptor 1 family.

The protein resides in the cell membrane. In terms of biological role, receptor for neuropeptide Y and peptide YY. The chain is Neuropeptide Y receptor type 2 (Npy2r) from Mus musculus (Mouse).